The sequence spans 235 residues: Interleukin-34 (235 aa).

Positions 1 to 20 (MPWGLAWLYCLGILLDVALG) are cleaved as a signal peptide. Residue Asn-100 is glycosylated (N-linked (GlcNAc...) asparagine).

It belongs to the IL-34 family. In terms of assembly, homodimer. Interacts with CSF1R.

It is found in the secreted. Functionally, cytokine that promotes the proliferation, survival and differentiation of monocytes and macrophages. Promotes the release of pro-inflammatory chemokines, and thereby plays an important role in innate immunity and in inflammatory processes. Plays an important role in the regulation of osteoclast proliferation and differentiation, and in the regulation of bone resorption. Signaling via CSF1R and its downstream effectors stimulates phosphorylation of MAPK1/ERK2 AND MAPK3/ERK1. The polypeptide is Interleukin-34 (Il34) (Mus musculus (Mouse)).